Here is an 851-residue protein sequence, read N- to C-terminus: Protein FAM13B (851 aa).

In terms of domain architecture, Rho-GAP spans 23–212 (IPLDELQQGG…GLLENYYEFF (190 aa)). Basic and acidic residues predominate over residues 556–565 (IKDAKHKNSD). Positions 556-611 (IKDAKHKNSDGEFAPQTRPRSNTLPKSFGSSLDHEDGESEGEPRVIQKEKTPSKEA) are disordered. Positions 573–585 (RPRSNTLPKSFGS) are enriched in polar residues. A compositionally biased stretch (basic and acidic residues) spans 596-611 (GEPRVIQKEKTPSKEA).

Belongs to the FAM13 family.

In Mus musculus (Mouse), this protein is Protein FAM13B (Fam13b).